Reading from the N-terminus, the 671-residue chain is Zinc finger and BTB domain-containing protein 16-A (671 aa).

The BTB domain maps to 34–96; that stretch reads CDVVIMVDSQ…AYTATLQAKV (63 aa). Disordered stretches follow at residues 130 to 167 and 248 to 289; these read ENDTEVNMNDGGTEDDEERKGRHGRNLVGSKKHSTEES and VDES…RSSV. A compositionally biased stretch (basic and acidic residues) spans 270-279; the sequence is RSGEPDKNRD. Threonine 283 carries the post-translational modification Phosphothreonine. 9 consecutive C2H2-type zinc fingers follow at residues 401-423, 429-451, 458-480, 487-509, 515-537, 544-566, 572-594, 600-622, and 628-650; these read ERCNVCGAELPDNEAIEQHRKLH, YGCELCGKRFLDSLRLRMHLLSH, IVCDQCGAQFQKEDALEAHRQIH, IFCLLCGKRFQTQTALQQHMEVH, YICSECNRTFPSHTALKRHLRSH, FECEFCGSCFRDESTLKGHKRIH, YECNGCGKKFSLKHQLETHYRVH, FECKLCHQRSRDYSAMIKHLRTH, and YQCTICLEYCPSLSAMQKHMKGH.

The protein belongs to the krueppel C2H2-type zinc-finger protein family. Interacts with btbd6a (via BTB domain). Polyubiquitinated, leading to its proteasomal degradation. During early stages of primary neurogenesis, expressed in the neural epithelium, with highest levels in the forebrain and midbrain. Also expressed in a posterior-to-anterior gradient in the caudal neural plate at the 3-6 somite stage.

The protein localises to the nucleus. It is found in the cytoplasm. It functions in the pathway protein modification; protein ubiquitination. Its function is as follows. Probable transcription factor. Probable substrate-recognition component of an E3 ubiquitin-protein ligase complex which mediates the ubiquitination and subsequent proteasomal degradation of target proteins. Inhibits neurogenesis. The polypeptide is Zinc finger and BTB domain-containing protein 16-A (Danio rerio (Zebrafish)).